The sequence spans 189 residues: Thermostable direct hemolysin (189 aa).

The N-terminal stretch at 1 to 24 is a signal peptide; the sequence is MKYQYFAKKSFLFISMLAAFKTFA. C175 and C185 are disulfide-bonded.

Belongs to the TDH hemolysin family. In terms of assembly, homodimer.

Bacterial hemolysins are exotoxins that attack blood cell membranes and cause cell rupture by mechanisms not clearly defined. The polypeptide is Thermostable direct hemolysin (tdh) (Vibrio mimicus).